Here is a 345-residue protein sequence, read N- to C-terminus: Phenylalanine--tRNA ligase alpha subunit (345 aa).

Glu272 lines the Mg(2+) pocket.

Belongs to the class-II aminoacyl-tRNA synthetase family. Phe-tRNA synthetase alpha subunit type 1 subfamily. In terms of assembly, tetramer of two alpha and two beta subunits. Mg(2+) serves as cofactor.

The protein resides in the cytoplasm. The catalysed reaction is tRNA(Phe) + L-phenylalanine + ATP = L-phenylalanyl-tRNA(Phe) + AMP + diphosphate + H(+). The sequence is that of Phenylalanine--tRNA ligase alpha subunit from Prochlorococcus marinus (strain MIT 9312).